Reading from the N-terminus, the 141-residue chain is Oleosin 14.9 kDa (141 aa).

The segment covering 1 to 22 has biased composition (basic and acidic residues); the sequence is MADQTRTHHEMISRDSTQEAHP. The disordered stretch occupies residues 1–24; sequence MADQTRTHHEMISRDSTQEAHPKA. The polar stretch occupies residues 1 to 29; that stretch reads MADQTRTHHEMISRDSTQEAHPKARQMVK. The tract at residues 30–141 is hydrophobic; that stretch reads AATAVTAGGS…NIGVQHQQVS (112 aa). Helical transmembrane passes span 38–58, 60–80, and 81–101; these read GSLL…LTVA, PLLV…ALII, and TGFL…SWLY.

The protein belongs to the oleosin family.

The protein localises to the lipid droplet. Its subcellular location is the membrane. In terms of biological role, may have a structural role to stabilize the lipid body during desiccation of the seed by preventing coalescence of the oil. Probably interacts with both lipid and phospholipid moieties of lipid bodies. May also provide recognition signals for specific lipase anchorage in lipolysis during seedling growth. This Arabidopsis thaliana (Mouse-ear cress) protein is Oleosin 14.9 kDa (OL3).